Consider the following 238-residue polypeptide: Ribosomal RNA small subunit methyltransferase G (238 aa).

S-adenosyl-L-methionine is bound by residues glycine 78, phenylalanine 83, 129–130 (AE), and arginine 148. Residues 217–238 (KKKETPKKYPRKAGTPAKSPIK) are disordered.

The protein belongs to the methyltransferase superfamily. RNA methyltransferase RsmG family.

It localises to the cytoplasm. In terms of biological role, specifically methylates the N7 position of a guanine in 16S rRNA. This chain is Ribosomal RNA small subunit methyltransferase G, found in Lactococcus lactis subsp. cremoris (strain SK11).